A 490-amino-acid polypeptide reads, in one-letter code: Subtilisin-like protease 8 (490 aa).

An N-terminal signal peptide occupies residues 1–26 (MKGLLSLSVLPVLAYASPMIVDSIHQ). A propeptide spanning residues 27 to 134 (NAAPILSSTN…YIERDSEVHT (108 aa)) is cleaved from the precursor. Residues 43-134 (SYIVVFKKGV…YIERDSEVHT (92 aa)) form the Inhibitor I9 domain. Residues 144-450 (PWGLARISHR…GGSDDYKKII (307 aa)) enclose the Peptidase S8 domain. Active-site charge relay system residues include aspartate 180 and histidine 212. Asparagine 282 carries an N-linked (GlcNAc...) asparagine glycan. Residue serine 378 is the Charge relay system of the active site. Asparagine 456 carries an N-linked (GlcNAc...) asparagine glycan.

It belongs to the peptidase S8 family.

It is found in the secreted. Secreted subtilisin-like serine protease with keratinolytic activity that contributes to pathogenicity. This chain is Subtilisin-like protease 8 (SUB8), found in Trichophyton verrucosum (strain HKI 0517).